The following is a 460-amino-acid chain: RING finger protein DG17 (460 aa).

An RING-type zinc finger spans residues 27-67; the sequence is CPICFEFIYKKQIYQCKSGHHACKECWEKSLETKKECMTCK. TRAF-type zinc fingers lie at residues 141 to 194 and 196 to 253; these read SHLI…KKEL and THYK…SELQ. A coiled-coil region spans residues 269–294; it reads IEKLTNQVGQSKKTHDELLKKIEDLS. The 129-residue stretch at 320–448 folds into the MATH domain; the sequence is GYRNKWIISN…DDKLIIEIYI (129 aa).

This sequence belongs to the TNF receptor-associated factor family. A subfamily.

It localises to the cytoplasm. Functionally, probable adapter protein and signal transducer that links members of the tumor necrosis factor receptor family to different signaling pathways by association with the receptor cytoplasmic domain and kinases. The polypeptide is RING finger protein DG17 (zfaA) (Dictyostelium discoideum (Social amoeba)).